The sequence spans 296 residues: 4-hydroxybenzoate octaprenyltransferase (296 aa).

Helical transmembrane passes span 22–42 (PIGI…SALG), 46–66 (WIVV…GCVI), 99–121 (LFAG…LVIW), 139–159 (FFAI…PMAY), 163–183 (LGEV…WAVA), 211–231 (FDVA…GGIG), 238–258 (PAFY…YTWI), and 270–290 (FLHN…DFLV).

This sequence belongs to the UbiA prenyltransferase family. The cofactor is Mg(2+).

The protein localises to the cell inner membrane. The enzyme catalyses all-trans-octaprenyl diphosphate + 4-hydroxybenzoate = 4-hydroxy-3-(all-trans-octaprenyl)benzoate + diphosphate. Its pathway is cofactor biosynthesis; ubiquinone biosynthesis. Its function is as follows. Catalyzes the prenylation of para-hydroxybenzoate (PHB) with an all-trans polyprenyl group. Mediates the second step in the final reaction sequence of ubiquinone-8 (UQ-8) biosynthesis, which is the condensation of the polyisoprenoid side chain with PHB, generating the first membrane-bound Q intermediate 3-octaprenyl-4-hydroxybenzoate. This is 4-hydroxybenzoate octaprenyltransferase from Dechloromonas aromatica (strain RCB).